We begin with the raw amino-acid sequence, 123 residues long: SLIQFETLIMKVVKKSGMFWYSAYGCYCGWGGHGRPQDATDRCCFVHDCCYGKVTGCDPKMDSYTYSEENGDIVCGGDDPCKREICECDRVAAVCFRDNLDTYNSDTYWRYPTKNCQEEPDPC.

Disulfide bonds link Cys26/Cys116, Cys28/Cys44, Cys43/Cys95, Cys49/Cys123, Cys50/Cys88, Cys57/Cys81, and Cys75/Cys86. Ca(2+)-binding residues include Tyr27, Gly29, and Gly31. His47 is an active-site residue. Asp48 serves as a coordination point for Ca(2+). Asp89 is an active-site residue.

This sequence belongs to the phospholipase A2 family. Group II subfamily. D49 sub-subfamily. In terms of assembly, homodimer. Requires Ca(2+) as cofactor. As to expression, expressed by the venom gland.

Its subcellular location is the secreted. The enzyme catalyses a 1,2-diacyl-sn-glycero-3-phosphocholine + H2O = a 1-acyl-sn-glycero-3-phosphocholine + a fatty acid + H(+). Functionally, snake venom phospholipase A2 (PLA2) that inhibits ADP-induced platelet aggregation. PLA2 catalyzes the calcium-dependent hydrolysis of the 2-acyl groups in 3-sn-phosphoglycerides. The chain is Acidic phospholipase A2 from Deinagkistrodon acutus (Hundred-pace snake).